Reading from the N-terminus, the 271-residue chain is Insulin-like growth factor-binding protein 5 (271 aa).

The N-terminal stretch at 1–19 (MVISVVLLLLAAYAVPAQG) is a signal peptide. The IGFBP N-terminal domain maps to 22–102 (SFVHCEPCDE…LHGRGVCLNE (81 aa)). 6 disulfides stabilise this stretch: cysteine 26–cysteine 52, cysteine 29–cysteine 54, cysteine 37–cysteine 55, cysteine 44–cysteine 58, cysteine 66–cysteine 79, and cysteine 73–cysteine 99. The span at 109–121 (TKIERDSREHEEP) shows a compositional bias: basic and acidic residues. Positions 109–129 (TKIERDSREHEEPTTSEMAEE) are disordered. Serine 115 bears the Phosphoserine mark. The region spanning 188-262 (QGPCRRHMEA…MEYVDGDFQC (75 aa)) is the Thyroglobulin type-1 domain. Disulfide bonds link cysteine 191-cysteine 218, cysteine 229-cysteine 240, and cysteine 242-cysteine 262.

As to quaternary structure, interacts with IGF1; this interaction enhances the growth stimulatory effects of IGF1 on fibroblasts. Interacts with CAV1; this interaction allows trafficking of IGFBP5 from the plasma membrane to the nucleus. Interacts with NCL; this interaction is necessary for IGFBP5 localization to the nucleus. In terms of tissue distribution, most abundant in kidney, uterus and gastrocnemius muscle.

It localises to the secreted. Its subcellular location is the cytoplasm. The protein localises to the nucleus. Functionally, multifunctional protein that plays a critical role in regulating the availability of IGFs to their receptors and thereby regulates IGF-mediated cellular processes including proliferation, differentiation, and apoptosis in a cell-type specific manner. Increases the cell proliferation of osteoblasts, intestinal smooth muscle cells and neuroblastoma cells. Enhances adhesion and survival of epithelial cells but decreases adhesion of mesenchymal cells. Once secreted, acts as a major mediator of mTORC1-dependent feedback inhibition of IGF1 signaling. Also plays a role in the induction of extracellular matrix (ECM) production and deposition independently of its nuclear translocation and binding to IGFs. Acts itself as a growth factor that can act independently of IGFs to regulate bone formation. Acts as a ligand for the ROR1 receptor which triggers formation of ROR1/HER2 heterodimer to enhance CREB oncogenic signaling. In Mus musculus (Mouse), this protein is Insulin-like growth factor-binding protein 5 (Igfbp5).